The sequence spans 197 residues: TATA-box-binding protein (197 aa).

Tandem repeats lie at residues 10–86 (IENI…VKLL) and 101–177 (IQNI…YNQL).

This sequence belongs to the TBP family.

Functionally, general factor that plays a role in the activation of archaeal genes transcribed by RNA polymerase. Binds specifically to the TATA box promoter element which lies close to the position of transcription initiation. In Pyrobaculum neutrophilum (strain DSM 2338 / JCM 9278 / NBRC 100436 / V24Sta) (Thermoproteus neutrophilus), this protein is TATA-box-binding protein.